A 333-amino-acid polypeptide reads, in one-letter code: Homeobox protein Hox-A1 (333 aa).

The disordered stretch occupies residues Ile-61–Ser-82. Residues Pro-64–Pro-74 are compositionally biased toward basic residues. The tract at residues Pro-74–Gln-202 is interaction with OGT. The O-linked (GlcNAc) threonine glycan is linked to Thr-152. The Antp-type hexapeptide motif lies at Thr-203 to Lys-208. The homeobox DNA-binding region spans Gln-227–Glu-286. The tract at residues Arg-279–His-333 is disordered. The segment covering Ser-301–Glu-310 has biased composition (basic and acidic residues). The segment covering Lys-311–His-333 has biased composition (low complexity).

This sequence belongs to the Antp homeobox family. Labial subfamily. Interacts with OGT (via TPR repeats domain); the interaction takes place mainly in the nucleus. Forms a DNA-binding heterodimer with transcription factor PBX1. Glycosylated by OGT.

The protein resides in the nucleus. In terms of biological role, sequence-specific transcription factor. Regulates multiple developmental processes including brainstem, inner and outer ear, abducens nerve and cardiovascular development and morphogenesis as well as cognition and behavior. Also part of a developmental regulatory system that provides cells with specific positional identities on the anterior-posterior axis. Acts on the anterior body structures. Seems to act in the maintenance and/or generation of hindbrain segments. Activates transcription in the presence of PBX1A and PKNOX1. In Rattus norvegicus (Rat), this protein is Homeobox protein Hox-A1 (Hoxa1).